The sequence spans 498 residues: Putative antiporter subunit mnhD2 (498 aa).

14 consecutive transmembrane segments (helical) span residues 2–22, 32–52, 78–98, 108–128, 130–150, 161–181, 209–229, 240–260, 271–291, 308–328, 330–350, 369–389, 406–426, and 451–471; these read LSNLLILPMLLPFLCALILVF, YLYLGTMTITTIISLMLLIYV, LSLIMVTTASFVITLIMAYGF, YHLPSFILFLSVGVIGSFLTS, LFNLYVMFEIMLLASFVLITL, IIYVVLNIIGSWLFLLGIGLL, ISLIFLVAFSAKAALVLFMWL, LAALFAALMTKVGAYALIRFF, IHPLLATMAAITMVIGAIGVI, IGFIILGLGTNTFAGINGAIF, LVNDIVVKTLLFFIIGSLVYI, FGVAFIIMIFAIGGVPPFSGF, IGLALMIITSLIAMYSLFRIF, and ILSILVVVVIAIGIAAPVVLN.

It belongs to the CPA3 antiporters (TC 2.A.63) subunit D family. In terms of assembly, may form a heterooligomeric complex that consists of seven subunits: mnhA2, mnhB2, mnhC2, mnhD2, mnhE2, mnhF2 and mnhG2.

It localises to the cell membrane. This is Putative antiporter subunit mnhD2 (mnhD2) from Staphylococcus aureus (strain Mu3 / ATCC 700698).